Here is a 173-residue protein sequence, read N- to C-terminus: MAIILGIDPGSRVTGYGVIRQQGRHLSYLGSGCIRTKVDDLPNRLQRIYAGILEIITQFQPDAFAIEQVFMAKNADSALKLGQARGVAILAAVNQSIPVFEYAARQVKQTVVGTGAAEKSQVQHMVRSVLKLSANPQSDAADALAIAITHCHFNQNLLRVGDPRLILARGRLR.

Active-site residues include D8, E67, and D139. Positions 8, 67, and 139 each coordinate Mg(2+).

This sequence belongs to the RuvC family. Homodimer which binds Holliday junction (HJ) DNA. The HJ becomes 2-fold symmetrical on binding to RuvC with unstacked arms; it has a different conformation from HJ DNA in complex with RuvA. In the full resolvosome a probable DNA-RuvA(4)-RuvB(12)-RuvC(2) complex forms which resolves the HJ. Mg(2+) is required as a cofactor.

The protein localises to the cytoplasm. It carries out the reaction Endonucleolytic cleavage at a junction such as a reciprocal single-stranded crossover between two homologous DNA duplexes (Holliday junction).. The RuvA-RuvB-RuvC complex processes Holliday junction (HJ) DNA during genetic recombination and DNA repair. Endonuclease that resolves HJ intermediates. Cleaves cruciform DNA by making single-stranded nicks across the HJ at symmetrical positions within the homologous arms, yielding a 5'-phosphate and a 3'-hydroxyl group; requires a central core of homology in the junction. The consensus cleavage sequence is 5'-(A/T)TT(C/G)-3'. Cleavage occurs on the 3'-side of the TT dinucleotide at the point of strand exchange. HJ branch migration catalyzed by RuvA-RuvB allows RuvC to scan DNA until it finds its consensus sequence, where it cleaves and resolves the cruciform DNA. The sequence is that of Crossover junction endodeoxyribonuclease RuvC from Photorhabdus laumondii subsp. laumondii (strain DSM 15139 / CIP 105565 / TT01) (Photorhabdus luminescens subsp. laumondii).